A 449-amino-acid polypeptide reads, in one-letter code: Glucose-6-phosphate isomerase (449 aa).

The active-site Proton donor is the Glu-291. Active-site residues include His-312 and Lys-426.

The protein belongs to the GPI family.

Its subcellular location is the cytoplasm. The catalysed reaction is alpha-D-glucose 6-phosphate = beta-D-fructose 6-phosphate. Its pathway is carbohydrate biosynthesis; gluconeogenesis. It participates in carbohydrate degradation; glycolysis; D-glyceraldehyde 3-phosphate and glycerone phosphate from D-glucose: step 2/4. In terms of biological role, catalyzes the reversible isomerization of glucose-6-phosphate to fructose-6-phosphate. The protein is Glucose-6-phosphate isomerase of Streptococcus pyogenes serotype M12 (strain MGAS2096).